The chain runs to 327 residues: MEPVIYSFATLLIHVEFIFGNLSNGFIVLSNFWDWVIKRKLSTIDKILLTLAISRITLIWEIYTWFTSVYGPSSFAIGMKLQILYFTWILSSHFSLWFATALSIFYLLRIANCSWKIFLYLKWRLKQVIVGMLLASLVFLPGILTQRTLEERPYRYGGNTSEDSMETDFARFTELILFNLTIFSVIPFSLASISFLLLIFSLWKHLRKMQLSSRGHGDPSTKAHTNALRIMVSFLLLYSIYFLSLLLSWIAQKHHSKLVDIIGIITGLMYPSAHSFILILGNSKLMQTSLWILSHLRCRLKGENILNPSGNQVTSCYIFCIANKSVS.

At 1 to 7 (MEPVIYS) the chain is on the extracellular side. The chain crosses the membrane as a helical span at residues 8-28 (FATLLIHVEFIFGNLSNGFIV). At 29–46 (LSNFWDWVIKRKLSTIDK) the chain is on the cytoplasmic side. A helical membrane pass occupies residues 47 to 67 (ILLTLAISRITLIWEIYTWFT). Over 68–87 (SVYGPSSFAIGMKLQILYFT) the chain is Extracellular. The chain crosses the membrane as a helical span at residues 88–108 (WILSSHFSLWFATALSIFYLL). At 109 to 124 (RIANCSWKIFLYLKWR) the chain is on the cytoplasmic side. Residues 125-145 (LKQVIVGMLLASLVFLPGILT) traverse the membrane as a helical segment. At 146-179 (QRTLEERPYRYGGNTSEDSMETDFARFTELILFN) the chain is on the extracellular side. Residues asparagine 159 and asparagine 179 are each glycosylated (N-linked (GlcNAc...) asparagine). A helical membrane pass occupies residues 180–200 (LTIFSVIPFSLASISFLLLIF). The Cytoplasmic segment spans residues 201–229 (SLWKHLRKMQLSSRGHGDPSTKAHTNALR). A helical transmembrane segment spans residues 230–250 (IMVSFLLLYSIYFLSLLLSWI). Topologically, residues 251–260 (AQKHHSKLVD) are extracellular. Residues 261-281 (IIGIITGLMYPSAHSFILILG) traverse the membrane as a helical segment. At 282–327 (NSKLMQTSLWILSHLRCRLKGENILNPSGNQVTSCYIFCIANKSVS) the chain is on the cytoplasmic side.

This sequence belongs to the G-protein coupled receptor T2R family.

It localises to the membrane. Its function is as follows. Putative taste receptor which may play a role in the perception of bitterness. The sequence is that of Taste receptor type 2 member 102 from Rattus norvegicus (Rat).